Consider the following 394-residue polypeptide: Glycerol-1-phosphate dehydrogenase [NAD(P)+] (394 aa).

NAD(+) contacts are provided by residues D54, 116–120 (GTIHD), and 138–141 (TAPS). A substrate-binding site is contributed by D143. S147 serves as a coordination point for NAD(+). Residue D190 coordinates substrate. Residues D190 and H270 each contribute to the Ni(2+) site. Position 274 (H274) interacts with substrate. H290 lines the Ni(2+) pocket.

Belongs to the glycerol-1-phosphate dehydrogenase family. As to quaternary structure, homodimer. The cofactor is Ni(2+).

The protein localises to the cytoplasm. It carries out the reaction sn-glycerol 1-phosphate + NAD(+) = dihydroxyacetone phosphate + NADH + H(+). The catalysed reaction is sn-glycerol 1-phosphate + NADP(+) = dihydroxyacetone phosphate + NADPH + H(+). Functionally, catalyzes the NAD(P)H-dependent reduction of dihydroxyacetonephosphate (DHAP or glycerone phosphate) to glycerol 1-phosphate (G1P). The G1P thus generated is probably used for the synthesis of phosphoglycerolipids in Gram-positive bacterial species. Prefers NADH over NADPH as coenzyme. Is also able to catalyze the reverse reaction, i.e. the NAD(+)-dependent oxidation of G1P but not of G3P. Does not possess glycerol dehydrogenase activity. The sequence is that of Glycerol-1-phosphate dehydrogenase [NAD(P)+] (egsA) from Bacillus subtilis (strain 168).